The primary structure comprises 228 residues: Aquaporin Z (228 aa).

A run of 2 helical transmembrane segments spans residues 1–21 and 23–43; these read MLNK…GGCG and AILA…ALAF. The NPA 1 motif lies at 63–65; that stretch reads NPA. 3 consecutive transmembrane segments (helical) span residues 82 to 102, 129 to 149, and 154 to 174; these read IPYW…LYVI, MMAG…IILG, and LAPA…IHLV. Positions 184–186 match the NPA 2 motif; the sequence is NPA. A helical transmembrane segment spans residues 205 to 225; sequence LFWVAPLVGAVIGAIIWKGLL.

The protein belongs to the MIP/aquaporin (TC 1.A.8) family. In terms of assembly, homotetramer.

The protein resides in the cell inner membrane. It catalyses the reaction H2O(in) = H2O(out). Its function is as follows. Channel that permits osmotically driven movement of water in both directions. It is involved in the osmoregulation and in the maintenance of cell turgor during volume expansion in rapidly growing cells. It mediates rapid entry or exit of water in response to abrupt changes in osmolarity. In Brucella melitensis biotype 1 (strain ATCC 23456 / CCUG 17765 / NCTC 10094 / 16M), this protein is Aquaporin Z.